Consider the following 311-residue polypeptide: Ornithine carbamoyltransferase (311 aa).

Residues Q85, R109, and 136–139 (HPCQ) contribute to the carbamoyl phosphate site. Residues N167, D231, and 235–236 (SM) contribute to the L-ornithine site. Carbamoyl phosphate-binding positions include 271–272 (CL) and R299.

It belongs to the aspartate/ornithine carbamoyltransferase superfamily. OTCase family.

It localises to the cytoplasm. It catalyses the reaction carbamoyl phosphate + L-ornithine = L-citrulline + phosphate + H(+). The protein operates within amino-acid biosynthesis; L-arginine biosynthesis; L-arginine from L-ornithine and carbamoyl phosphate: step 1/3. Its function is as follows. Reversibly catalyzes the transfer of the carbamoyl group from carbamoyl phosphate (CP) to the N(epsilon) atom of ornithine (ORN) to produce L-citrulline. The chain is Ornithine carbamoyltransferase (argF) from Geobacillus stearothermophilus (Bacillus stearothermophilus).